Consider the following 104-residue polypeptide: Large ribosomal subunit protein uL24 (104 aa).

The protein belongs to the universal ribosomal protein uL24 family. In terms of assembly, part of the 50S ribosomal subunit.

Functionally, one of two assembly initiator proteins, it binds directly to the 5'-end of the 23S rRNA, where it nucleates assembly of the 50S subunit. Its function is as follows. One of the proteins that surrounds the polypeptide exit tunnel on the outside of the subunit. In Pectobacterium atrosepticum (strain SCRI 1043 / ATCC BAA-672) (Erwinia carotovora subsp. atroseptica), this protein is Large ribosomal subunit protein uL24.